The primary structure comprises 409 residues: Endoglucanase B (409 aa).

Residues His-61, 65–66 (WY), Tyr-92, and His-127 each bind substrate. Catalysis depends on Glu-165, which acts as the Proton donor. Tyr-228 provides a ligand contact to substrate. Glu-254 functions as the Nucleophile in the catalytic mechanism. Substrate-binding positions include 260–261 (AT), Trp-288, and 293–295 (KDE). The tract at residues 326–372 (IRESATTPPSDPTPPSDPDPGEPEPDPGEPDPTPPSDPGDYPAWDPN) is disordered. Residues 334–343 (PSDPTPPSDP) are compositionally biased toward pro residues. A compositionally biased stretch (acidic residues) spans 344–354 (DPGEPEPDPGE).

Belongs to the glycosyl hydrolase 5 (cellulase A) family.

The catalysed reaction is Endohydrolysis of (1-&gt;4)-beta-D-glucosidic linkages in cellulose, lichenin and cereal beta-D-glucans.. The chain is Endoglucanase B (celB) from Evansella cellulosilytica (strain ATCC 21833 / DSM 2522 / FERM P-1141 / JCM 9156 / N-4) (Bacillus cellulosilyticus).